The primary structure comprises 560 residues: Mitochondria-eating protein (560 aa).

The interaction with YWHAG/14-3-3 protein gamma stretch occupies residues 1 to 294; sequence MADNLRKLVS…SHSRNHSRSR (294 aa). Phosphoserine is present on residues Ser-13, Ser-85, Ser-156, and Ser-159. Coiled-coil stretches lie at residues 118–186 and 223–248; these read DRNI…SRHR and DYEK…LQGR. 2 disordered regions span residues 178–217 and 243–316; these read QAQE…AQRK and SVLQ…AKLS. Residues 181–209 are compositionally biased toward basic and acidic residues; the sequence is EESRHRPPEHRSSEKRGSERRRVEPRGAD. Residues 248-262 show a composition bias toward low complexity; sequence RSTRSRSPSPASCSR. Residues 263–293 show a composition bias toward basic residues; the sequence is SRSHSHSRSRSHSHSRSGSHSRSHSRNHSRS. Residues 300–310 are compositionally biased toward polar residues; the sequence is TAVSGVRSPSP. 3 positions are modified to phosphoserine: Ser-307, Ser-309, and Ser-531.

This sequence belongs to the MIEAP family. As to quaternary structure, interacts (via coiled-coil domains) with BNIP3L (via BH3 domain). Interacts (via coiled-coil domains) with BNIP3 (via BH3 domain). Interacts with YWHAG/14-3-3 protein gamma; a protein that also plays a role in MALM.

It localises to the cytoplasm. The protein resides in the cytosol. The protein localises to the mitochondrion outer membrane. Its subcellular location is the mitochondrion matrix. Functionally, key regulator of mitochondrial quality that mediates the repairing or degradation of unhealthy mitochondria in response to mitochondrial damage. Mediator of mitochondrial protein catabolic process (also named MALM) by mediating the degradation of damaged proteins inside mitochondria by promoting the accumulation in the mitochondrial matrix of hydrolases that are characteristic of the lysosomal lumen. Also involved in mitochondrion degradation of damaged mitochondria by promoting the formation of vacuole-like structures (named MIV), which engulf and degrade unhealthy mitochondria by accumulating lysosomes. The physical interaction of SPATA18/MIEAP, BNIP3 and BNIP3L/NIX at the mitochondrial outer membrane regulates the opening of a pore in the mitochondrial double membrane in order to mediate the translocation of lysosomal proteins from the cytoplasm to the mitochondrial matrix. Binds cardiolipin. May form molecular condensates (non-membrane-bounded organelles) within mitochondria that compartmentalize and promote cardiolipin metabolism. The chain is Mitochondria-eating protein (SPATA18) from Sus scrofa (Pig).